Consider the following 128-residue polypeptide: Translation initiation factor 5A (128 aa).

The residue at position 35 (Lys-35) is a Hypusine.

This sequence belongs to the eIF-5A family.

It is found in the cytoplasm. Functionally, functions by promoting the formation of the first peptide bond. This Methanosarcina acetivorans (strain ATCC 35395 / DSM 2834 / JCM 12185 / C2A) protein is Translation initiation factor 5A (eif5a).